The primary structure comprises 91 residues: Putative pterin-4-alpha-carbinolamine dehydratase (91 aa).

Belongs to the pterin-4-alpha-carbinolamine dehydratase family.

It catalyses the reaction (4aS,6R)-4a-hydroxy-L-erythro-5,6,7,8-tetrahydrobiopterin = (6R)-L-erythro-6,7-dihydrobiopterin + H2O. This Halobacterium salinarum (strain ATCC 29341 / DSM 671 / R1) protein is Putative pterin-4-alpha-carbinolamine dehydratase.